Reading from the N-terminus, the 478-residue chain is Allene oxide synthase 2 (478 aa).

Heme b contacts are provided by lysine 88, histidine 119, and lysine 123. Asparagine 278 contacts (13S)-hydroperoxy-(9Z,11E,15Z)-octadecatrienoate. Heme b is bound by residues lysine 427 and cysteine 429.

It belongs to the cytochrome P450 family. Heme b serves as cofactor. In terms of tissue distribution, weakly expressed in roots, shoots, leaves and flowers.

The enzyme catalyses (13S)-hydroperoxy-(9Z,11E,15Z)-octadecatrienoate = (9Z,13S,15Z)-12,13-epoxyoctadeca-9,11,15-trienoate + H2O. Its pathway is lipid metabolism; oxylipin biosynthesis. Involved in the biosynthesis of jasmonic acid, a growth regulator that is implicated also as a signaling molecule in plant defense. Converts 13-hydroperoxylinolenic acid to 12,13-epoxylinolenic acid. The sequence is that of Allene oxide synthase 2 (CYP74A2) from Oryza sativa subsp. japonica (Rice).